A 496-amino-acid chain; its full sequence is Endoglucanase (496 aa).

An N-terminal signal peptide occupies residues 1–23; the sequence is MGYHSVFIAVFLWSSMVCHNGLA. The Nucleophile role is filled by D93. Catalysis depends on residues H415, D467, and E476.

Belongs to the glycosyl hydrolase 9 (cellulase E) family.

It carries out the reaction Endohydrolysis of (1-&gt;4)-beta-D-glucosidic linkages in cellulose, lichenin and cereal beta-D-glucans.. In terms of biological role, involved in ripening fruit process. This is Endoglucanase from Phaseolus vulgaris (Kidney bean).